The sequence spans 272 residues: MKRQFEDVTRIVIKIGTSSLVLPTGKINLEKIDQLAFVISSLMNKGKEVILVSSGAMGFGLDILKMEKRPTNLAKQQAVSSVGQVAMMSLYSQIFAHYQTNVSQILLTRDVVVFPESLANVTNAFESLISLGIVPIVNENDAVSVDEMDHATKFGDNDRLSAVVAGITKADLLIMLSDIDGLFDKNPTIYEDAQLRSHVAVITQEIIASAGGAGSKFGTGGMLSKIQSAQMVFENKGQMVLMNGANPRDILRVLEGQPLGTWFKQIEEVTHD.

Residue K14 coordinates ATP. Substrate is bound by residues S54, D141, and N157. Residues 177 to 178 (SD) and 219 to 225 (TGGMLSK) each bind ATP.

Belongs to the glutamate 5-kinase family.

It localises to the cytoplasm. It catalyses the reaction L-glutamate + ATP = L-glutamyl 5-phosphate + ADP. It participates in amino-acid biosynthesis; L-proline biosynthesis; L-glutamate 5-semialdehyde from L-glutamate: step 1/2. In terms of biological role, catalyzes the transfer of a phosphate group to glutamate to form L-glutamate 5-phosphate. The protein is Glutamate 5-kinase of Streptococcus pyogenes serotype M28 (strain MGAS6180).